Consider the following 294-residue polypeptide: Eukaryotic translation initiation factor 3 subunit F (294 aa).

In terms of domain architecture, MPN spans 7–155 (VNVHPGVYMN…VRAYLRSKAG (149 aa)).

It belongs to the eIF-3 subunit F family. As to quaternary structure, component of the eukaryotic translation initiation factor 3 (eIF-3) complex.

Its subcellular location is the cytoplasm. Component of the eukaryotic translation initiation factor 3 (eIF-3) complex, which is involved in protein synthesis of a specialized repertoire of mRNAs and, together with other initiation factors, stimulates binding of mRNA and methionyl-tRNAi to the 40S ribosome. The eIF-3 complex specifically targets and initiates translation of a subset of mRNAs involved in cell proliferation. This is Eukaryotic translation initiation factor 3 subunit F from Caenorhabditis elegans.